Here is a 188-residue protein sequence, read N- to C-terminus: dCTP deaminase (188 aa).

Residues 111–116 (KSTYAR), 135–137 (TLE), Gln156, Tyr170, and Gln180 each bind dCTP. Glu137 serves as the catalytic Proton donor/acceptor.

This sequence belongs to the dCTP deaminase family. In terms of assembly, homotrimer.

It catalyses the reaction dCTP + H2O + H(+) = dUTP + NH4(+). Its pathway is pyrimidine metabolism; dUMP biosynthesis; dUMP from dCTP (dUTP route): step 1/2. Functionally, catalyzes the deamination of dCTP to dUTP. The protein is dCTP deaminase of Janthinobacterium sp. (strain Marseille) (Minibacterium massiliensis).